Consider the following 166-residue polypeptide: Peptide methionine sulfoxide reductase MsrA (166 aa).

The active site involves Cys11.

It belongs to the MsrA Met sulfoxide reductase family.

It catalyses the reaction L-methionyl-[protein] + [thioredoxin]-disulfide + H2O = L-methionyl-(S)-S-oxide-[protein] + [thioredoxin]-dithiol. It carries out the reaction [thioredoxin]-disulfide + L-methionine + H2O = L-methionine (S)-S-oxide + [thioredoxin]-dithiol. Functionally, has an important function as a repair enzyme for proteins that have been inactivated by oxidation. Catalyzes the reversible oxidation-reduction of methionine sulfoxide in proteins to methionine. This Mycoplasmopsis pulmonis (strain UAB CTIP) (Mycoplasma pulmonis) protein is Peptide methionine sulfoxide reductase MsrA.